We begin with the raw amino-acid sequence, 374 residues long: Occlusion-derived virus envelope protein E56 (374 aa).

A helical transmembrane segment spans residues 155 to 175 (AGVGVLLAGGAYLTFSAATLV). Asn183 carries N-linked (GlcNAc...) asparagine; by host glycosylation. Residues 319–339 (LMPLIWLIGAVLFLALVVYLI) traverse the membrane as a helical segment. Residues 355-374 (PPVVIVPPPATTNLNPQQQI) are disordered.

The protein belongs to the baculoviridae E56 family.

It localises to the virion membrane. Functionally, structural protein that is specific for occlusion-derived virus (ODV) envelopes but not of budded virus (BV). In Orgyia pseudotsugata (Douglas-fir tussock moth), this protein is Occlusion-derived virus envelope protein E56 (ODVP6E).